The following is a 360-amino-acid chain: S-adenosylmethionine-dependent nucleotide dehydratase RSAD2 (360 aa).

Positions K44–P71 are disordered. A compositionally biased stretch (basic and acidic residues) spans V49–P63. The region spanning P68–L288 is the Radical SAM core domain. 3 residues coordinate [4Fe-4S] cluster: C82, C86, and C89. K196 is subject to N6-acetyllysine. A Glycyl lysine isopeptide (Lys-Gly) (interchain with G-Cter in ubiquitin) cross-link involves residue K205.

This sequence belongs to the radical SAM superfamily. RSAD2 family. Homodimer. Interacts with IRAK1 and TRAF6. Interacts with FPPS. Interacts with HADHB. Interacts (via C-terminus) with VAPA/VAP33 (via C-terminus). It depends on [4Fe-4S] cluster as a cofactor. Post-translationally, acetylated by HAT1. HAT1-mediated acetylation of Lys-196 in turn recruits UBE4A that stimulates RSAD2 polyubiquitination leading to proteasomal degradation. In terms of processing, 'Lys-6'-linked polyubiquitination at Lys-205 leads to RSAD2 protein degradation. In neonatal rat tibia, specifically localized in cells of the periosteum, in osteoblasts lining endosteal and peristeal bone surfaces, to articular surfaces of cartilage and in perichondral cells but not in chondrocytes (at protein level). Expressed predominantly in bone marrow and spleen.

Its subcellular location is the endoplasmic reticulum membrane. It localises to the golgi apparatus. It is found in the endoplasmic reticulum. The protein resides in the lipid droplet. The protein localises to the mitochondrion. Its subcellular location is the mitochondrion inner membrane. It localises to the mitochondrion outer membrane. The enzyme catalyses CTP + AH2 + S-adenosyl-L-methionine = 3'-deoxy-3',4'-didehydro-CTP + 5'-deoxyadenosine + L-methionine + A + H2O + H(+). With respect to regulation, IRAK1 and TRAF6 synergistically activate RSAD2 increasing its activity with CTP as substrate about 10-fold. Interferon-inducible antiviral protein which plays a major role in the cell antiviral state induced by type I and type II interferon. Catalyzes the conversion of cytidine triphosphate (CTP) to 3'-deoxy-3',4'-didehydro-CTP (ddhCTP) via a SAM-dependent radical mechanism. In turn, ddhCTP acts as a chain terminator for the RNA-dependent RNA polymerases from multiple viruses and directly inhibits viral replication. Therefore, inhibits a wide range of DNA and RNA viruses. Also promotes TLR7 and TLR9-dependent production of IFN-beta production in plasmacytoid dendritic cells (pDCs) by facilitating 'Lys-63'-linked ubiquitination of IRAK1 by TRAF6. Plays a role in CD4+ T-cells activation and differentiation. Facilitates T-cell receptor (TCR)-mediated GATA3 activation and optimal T-helper 2 (Th2) cytokine production by modulating NFKB1 and JUNB activities. Can inhibit secretion of soluble proteins. In Rattus norvegicus (Rat), this protein is S-adenosylmethionine-dependent nucleotide dehydratase RSAD2.